A 436-amino-acid chain; its full sequence is 3-ketoacyl-CoA thiolase (436 aa).

The active-site Acyl-thioester intermediate is Cys-99. Active-site proton acceptor residues include His-392 and Cys-422.

It belongs to the thiolase-like superfamily. Thiolase family. Heterotetramer of two alpha chains (FadJ) and two beta chains (FadI).

The protein localises to the cytoplasm. It catalyses the reaction an acyl-CoA + acetyl-CoA = a 3-oxoacyl-CoA + CoA. The protein operates within lipid metabolism; fatty acid beta-oxidation. Catalyzes the final step of fatty acid oxidation in which acetyl-CoA is released and the CoA ester of a fatty acid two carbons shorter is formed. In Photorhabdus laumondii subsp. laumondii (strain DSM 15139 / CIP 105565 / TT01) (Photorhabdus luminescens subsp. laumondii), this protein is 3-ketoacyl-CoA thiolase.